The following is an 877-amino-acid chain: Protein P (877 aa).

A terminal protein domain (TP) region spans residues 1–183 (MHPFSQLFRN…GKPYSWGHRQ (183 aa)). The tract at residues 184 to 382 (LEQHNGQQHE…YCLHHIVSSL (199 aa)) is spacer. The span at 185 to 198 (EQHNGQQHESHLQS) shows a compositional bias: basic and acidic residues. The segment at 185-347 (EQHNGQQHES…PSSSGLCGGT (163 aa)) is disordered. A compositionally biased stretch (polar residues) spans 233 to 242 (FGESQKSART). The span at 267 to 281 (QQGSSQVSSPRSKSS) shows a compositional bias: low complexity. 2 stretches are compositionally biased toward polar residues: residues 282-302 (NFRN…PTWY) and 338-347 (PSSSGLCGGT). Residues 383 to 723 (EDWGPCTISG…YAELWPVARQ (341 aa)) form a polymerase/reverse transcriptase domain (RT) region. The Reverse transcriptase domain occupies 393 to 634 (DVTIRSPRTP…HHLHFMGYVI (242 aa)). Mg(2+) contacts are provided by D465, D585, and D586.

The protein belongs to the hepadnaviridae P protein family.

The catalysed reaction is DNA(n) + a 2'-deoxyribonucleoside 5'-triphosphate = DNA(n+1) + diphosphate. It carries out the reaction Endonucleolytic cleavage to 5'-phosphomonoester.. Its activity is regulated as follows. Activated by host HSP70 and HSP40 in vitro to be able to bind the epsilon loop of the pgRNA. Because deletion of the RNase H region renders the protein partly chaperone-independent, the chaperones may be needed indirectly to relieve occlusion of the RNA-binding site by this domain. Inhibited by several reverse-transcriptase inhibitors: Lamivudine, Adefovir and Entecavir. Multifunctional enzyme that converts the viral RNA genome into dsDNA in viral cytoplasmic capsids. This enzyme displays a DNA polymerase activity that can copy either DNA or RNA templates, and a ribonuclease H (RNase H) activity that cleaves the RNA strand of RNA-DNA heteroduplexes in a partially processive 3'- to 5'-endonucleasic mode. Neo-synthesized pregenomic RNA (pgRNA) are encapsidated together with the P protein, and reverse-transcribed inside the nucleocapsid. Initiation of reverse-transcription occurs first by binding the epsilon loop on the pgRNA genome, and is initiated by protein priming, thereby the 5'-end of (-)DNA is covalently linked to P protein. Partial (+)DNA is synthesized from the (-)DNA template and generates the relaxed circular DNA (RC-DNA) genome. After budding and infection, the RC-DNA migrates in the nucleus, and is converted into a plasmid-like covalently closed circular DNA (cccDNA). The activity of P protein does not seem to be necessary for cccDNA generation, and is presumably released from (+)DNA by host nuclear DNA repair machinery. This is Protein P from Arctic squirrel hepatitis virus (ASHV).